The sequence spans 471 residues: Mannose-1-phosphate guanylyltransferase (471 aa).

Belongs to the mannose-6-phosphate isomerase type 2 family.

It catalyses the reaction alpha-D-mannose 1-phosphate + GTP + H(+) = GDP-alpha-D-mannose + diphosphate. It participates in nucleotide-sugar biosynthesis; GDP-alpha-D-mannose biosynthesis; GDP-alpha-D-mannose from alpha-D-mannose 1-phosphate (GTP route): step 1/1. It functions in the pathway bacterial outer membrane biogenesis; LPS O-antigen biosynthesis. Its function is as follows. Involved in GDP-mannose biosynthesis which serves as the activated sugar nucleotide precursor for mannose residues in cell surface polysaccharides. This enzyme participates in synthesis of the LPS O9 antigen. This Escherichia coli protein is Mannose-1-phosphate guanylyltransferase (manC).